A 552-amino-acid polypeptide reads, in one-letter code: Urocanate hydratase (552 aa).

NAD(+) contacts are provided by residues 50-51 (GG), glutamine 128, 174-176 (GMG), glutamate 194, arginine 199, 261-265 (QTSAH), 271-272 (YI), and tyrosine 320. Cysteine 408 is an active-site residue. Glycine 490 is a binding site for NAD(+).

The protein belongs to the urocanase family. The cofactor is NAD(+).

It localises to the cytoplasm. It catalyses the reaction 4-imidazolone-5-propanoate = trans-urocanate + H2O. Its pathway is amino-acid degradation; L-histidine degradation into L-glutamate; N-formimidoyl-L-glutamate from L-histidine: step 2/3. Functionally, catalyzes the conversion of urocanate to 4-imidazolone-5-propionate. This Bdellovibrio bacteriovorus (strain ATCC 15356 / DSM 50701 / NCIMB 9529 / HD100) protein is Urocanate hydratase.